The primary structure comprises 143 residues: Endoribonuclease YbeY (143 aa).

Zn(2+) contacts are provided by histidine 109, histidine 113, and histidine 119.

It belongs to the endoribonuclease YbeY family. Requires Zn(2+) as cofactor.

The protein localises to the cytoplasm. Its function is as follows. Single strand-specific metallo-endoribonuclease involved in late-stage 70S ribosome quality control and in maturation of the 3' terminus of the 16S rRNA. The polypeptide is Endoribonuclease YbeY (Leptospira borgpetersenii serovar Hardjo-bovis (strain JB197)).